Reading from the N-terminus, the 1073-residue chain is Activated Cdc42 kinase Ack (1073 aa).

The interval 88-110 is disordered; that stretch reads IGGGKQPSSKKQSSAARESSQGN. The region spanning 123–383 is the Protein kinase domain; sequence ITMGLKLGDG…PTFAALKEYL (261 aa). ATP is bound by residues 129 to 137 and Lys156; that span reads LGDGSFGVV. The active-site Proton acceptor is Asp250. The 61-residue stretch at 386–446 folds into the SH3 domain; it reads MSPPVMRASR…PRNLLEQRKV (61 aa). Disordered regions lie at residues 484–506, 803–834, and 862–882; these read QRKC…SSKQ, PLKN…VEAA, and AQPP…HQQQ. A compositionally biased stretch (low complexity) spans 812–826; the sequence is SVHSNHSSPSSTASP. One can recognise a UBA domain in the interval 1029–1072; sequence GLATRHYKIDQLARLGVAGRPQCEQALQQTNWSLEVAAELLLNA.

Belongs to the protein kinase superfamily. Tyr protein kinase family. Interacts with yki and ex. Interacts with drk. Likely to be a member of an axonal guidance receptor complex that includes SH3PX1, dock and Dscam. Interacts (via N-terminus) with dock. Interacts with SH3PX1 (via SH3 domain). It depends on Mg(2+) as a cofactor. In terms of processing, phosphorylated. Autophosphorylated. Detected in ovaries (at protein level). In adults, relatively higher expression in the head compared to the body.

It localises to the cytoplasm. Its subcellular location is the cytoplasmic vesicle. It is found in the clathrin-coated vesicle. It carries out the reaction L-tyrosyl-[protein] + ATP = O-phospho-L-tyrosyl-[protein] + ADP + H(+). The catalysed reaction is L-threonyl-[protein] + ATP = O-phospho-L-threonyl-[protein] + ADP + H(+). Functionally, non-receptor tyrosine-protein and serine/threonine-protein kinase that is implicated in diverse biological functions such as cell survival, cell differentiation, cell growth and proliferation. Phosphorylates SH3PX1 and ex. Phosphorylates SH3PX1 predominantly on 'Tyr-56', which likely promotes the recruitment of SH3PX1 to an axonal guidance receptor complex that includes dock and Dscam; because phosphorylation of SH3PX1 increases its interaction with the complex member dock while decreasing its interaction with the actin cytoskeleton modulator WASp. In the wing and eye, promotes tissue growth, and during embryogenesis coordinates cell shape changes required for correct dorsal closure. Functions in the negative regulation of the Hippo/SWH (Sav/Wts/Hpo) signaling pathway by enhancing yki activity thereby promoting cell proliferation and inhibiting apoptosis. This is accomplished, at least in part, by phosphorylating ex thereby reducing its ability to efficiently activate the Hippo signaling cascade. In the eye disk, wing disk and possibly spermatids, inhibits programmed cell death induced by hid and rpr through a mechanism that is independent of the MAP kinase signal transduction pathway. Essential for male and female fertility. During oogenesis required for the correct temporal assembly, and consequently the catalytic activity of long Ctps filaments (cytoophidium) in the germline nurse cells, likely by phosphorylating an unidentified substrate that is essential for linking individual Ctps filaments into large, catalytically active assemblies. The sequence is that of Activated Cdc42 kinase Ack from Drosophila melanogaster (Fruit fly).